The primary structure comprises 216 residues: Probable nicotinate-nucleotide adenylyltransferase (216 aa).

It belongs to the NadD family.

The enzyme catalyses nicotinate beta-D-ribonucleotide + ATP + H(+) = deamido-NAD(+) + diphosphate. The protein operates within cofactor biosynthesis; NAD(+) biosynthesis; deamido-NAD(+) from nicotinate D-ribonucleotide: step 1/1. Catalyzes the reversible adenylation of nicotinate mononucleotide (NaMN) to nicotinic acid adenine dinucleotide (NaAD). In Shewanella baltica (strain OS223), this protein is Probable nicotinate-nucleotide adenylyltransferase.